A 221-amino-acid chain; its full sequence is Oxaloacetate tautomerase FAHD1, mitochondrial (221 aa).

Residues 1–24 (MAASRPLSRFWEWGKNIVCVGRNY) constitute a mitochondrion transit peptide. Ser-37 is modified (phosphoserine). Mg(2+) contacts are provided by Glu-68, Glu-70, and Asp-99. At Lys-110 the chain carries N6-acetyllysine. Position 112 is an N6-succinyllysine (Lys-112).

Belongs to the FAH family. In terms of assembly, homodimer. Requires Mg(2+) as cofactor. The cofactor is Mn(2+).

It is found in the mitochondrion. The protein resides in the cytoplasm. Its subcellular location is the cytosol. It catalyses the reaction oxaloacetate = enol-oxaloacetate. It carries out the reaction oxaloacetate + H(+) = pyruvate + CO2. The enzyme catalyses a 3-acylpyruvate + H2O = a carboxylate + pyruvate + H(+). The catalysed reaction is acetylpyruvate + H2O = acetate + pyruvate + H(+). It catalyses the reaction 3-fumarylpyruvate + H2O = fumarate + pyruvate + H(+). With respect to regulation, oxaloacetate decarboxylation is competitively inhibited by oxalate. Tautomerase that converts enol-oxaloacetate, a strong inhibitor of succinate dehydrogenase, to the physiological keto form of oxaloacetate. It is thereby required to maximize aerobic respiration efficiency by preventing succinate dehydrogenase inhibition. Also acts as a weak oxaloacetate decarboxylase (ODx), catalyzing the decarboxylation of oxaloacetate (OAA) to pyruvate and CO(2), and as such is likely a regulatory enzyme in the TCA cycle. Also displays acylpyruvase activity, being able to hydrolyze acetylpyruvate and fumarylpyruvate in vitro. This Pongo abelii (Sumatran orangutan) protein is Oxaloacetate tautomerase FAHD1, mitochondrial (FAHD1).